Consider the following 395-residue polypeptide: MFFGAFWLLLLLLLPPLRPPGAQGHRGAKSPEQEADEPIPWPSIQRLREQLRTAGTLSKRYWALFSCTLWPDHCEDQETPVPPLGWSLPLWGRRSLDMLTSWFCRFQDCCSAGNCRISNNFTGLESDLRVRLHGQHLASKLVLEAVKGYLEMPQVGKALALSFHGWSGTGKNFVARMLVDNLYRDGMRSDCVKMFISTFHFPHPKYVDLYKEDLQRQMQETQRRCQQSTFVFDEAEKLHPGLLELLEPYLEPRSPETHGAELPRAIFLLLSNLGGSVINEVVLGLLKAGWSREEITLQHLEMPLQAEIIKSADSSFGSSRLLKKHLIDLFIPFLPLEYRHVRLCVRDAFLGQDLPYTEEALDEIAKMMTYVPEEEQLFSSQGCKSISQRINLVLP.

The first 24 residues, 1–24 (MFFGAFWLLLLLLLPPLRPPGAQG), serve as a signal peptide directing secretion. N-linked (GlcNAc...) asparagine glycosylation is present at Asn-120. ATP is bound at residue 165–172 (GWSGTGKN).

It belongs to the ClpA/ClpB family. Torsin subfamily. In terms of assembly, may not form homohexamers. N-glycosylated.

It localises to the cytoplasm. The protein localises to the endoplasmic reticulum lumen. The polypeptide is Torsin-3A (Tor3a) (Rattus norvegicus (Rat)).